A 63-amino-acid chain; its full sequence is Toxin Cn11 (63 aa).

Residues 2–63 enclose the LCN-type CS-alpha/beta domain; that stretch reads RDGYPVDEKG…KVWTYETNTC (62 aa). 4 disulfides stabilise this stretch: Cys12–Cys63, Cys16–Cys37, Cys23–Cys44, and Cys27–Cys46.

The protein belongs to the long (4 C-C) scorpion toxin superfamily. Sodium channel inhibitor family. Expressed by the venom gland.

The protein resides in the secreted. First blocker of sodium channels (Nav) found in scorpions. Is lethal to crustaceans (Cambarellus montezumae), less toxic to insects (crickets) and non-toxic to mammals (mice) at the doses assayed. In Centruroides noxius (Mexican scorpion), this protein is Toxin Cn11.